We begin with the raw amino-acid sequence, 525 residues long: GMP synthase [glutamine-hydrolyzing] (525 aa).

One can recognise a Glutamine amidotransferase type-1 domain in the interval P8–E206. Catalysis depends on C85, which acts as the Nucleophile. Active-site residues include H180 and E182. Residues W207–R400 form the GMPS ATP-PPase domain. Residue S234–S240 coordinates ATP.

As to quaternary structure, homodimer.

The enzyme catalyses XMP + L-glutamine + ATP + H2O = GMP + L-glutamate + AMP + diphosphate + 2 H(+). The protein operates within purine metabolism; GMP biosynthesis; GMP from XMP (L-Gln route): step 1/1. Catalyzes the synthesis of GMP from XMP. This chain is GMP synthase [glutamine-hydrolyzing], found in Legionella pneumophila (strain Corby).